Consider the following 102-residue polypeptide: A-type ATP synthase subunit F (102 aa).

The protein belongs to the V-ATPase F subunit family. Has multiple subunits with at least A(3), B(3), C, D, E, F, H, I and proteolipid K(x).

Its subcellular location is the cell membrane. Component of the A-type ATP synthase that produces ATP from ADP in the presence of a proton gradient across the membrane. The chain is A-type ATP synthase subunit F from Thermococcus gammatolerans (strain DSM 15229 / JCM 11827 / EJ3).